We begin with the raw amino-acid sequence, 169 residues long: Der GTPase-activating protein YihI (169 aa).

Disordered regions lie at residues 1–99 and 146–169; these read MKPS…QAEL and SYDD…LRGN. Over residues 10 to 19 the composition is skewed to basic residues; the sequence is SKGHAKARRK. Residues 20–30 are compositionally biased toward basic and acidic residues; that stretch reads TREELDQEARD. The span at 31-40 shows a compositional bias: basic residues; it reads RKRQKKRRGH. The segment covering 49 to 58 has biased composition (polar residues); sequence GNTTSGSKGQ. Residues 147-159 show a composition bias toward acidic residues; the sequence is YDDDEEEEEDEKQ. The segment covering 160–169 has biased composition (basic and acidic residues); sequence EDMMRLLRGN.

The protein belongs to the YihI family. In terms of assembly, interacts with Der.

In terms of biological role, a GTPase-activating protein (GAP) that modifies Der/EngA GTPase function. May play a role in ribosome biogenesis. The chain is Der GTPase-activating protein YihI from Escherichia coli O81 (strain ED1a).